Reading from the N-terminus, the 433-residue chain is UPF0761 membrane protein Sde_0901 (433 aa).

Helical transmembrane passes span 46–66, 103–123, 142–162, 185–205, 217–237, and 247–267; these read LFAM…FPAF, LSAA…TNIE, FLLY…GLAM, FFSY…FAAV, IGGI…GWVV, and GAFA…MIIL.

Belongs to the UPF0761 family.

The protein localises to the cell inner membrane. The chain is UPF0761 membrane protein Sde_0901 from Saccharophagus degradans (strain 2-40 / ATCC 43961 / DSM 17024).